Consider the following 1116-residue polypeptide: Anillin (1116 aa).

Composition is skewed to basic and acidic residues over residues 1–25 (MDPF…KMAD) and 85–94 (KQPKTPELPK). 4 disordered regions span residues 1–188 (MDPF…PVGR), 205–257 (DLSH…PKDT), 304–363 (KPNE…KVAT), and 443–522 (NVWT…PRLV). A compositionally biased stretch (polar residues) spans 101-119 (ASHQQLRATNQTPQVSLLS). Residues 120–133 (SDKELTASDVKDAS) show a composition bias toward basic and acidic residues. The interactions with myh9 and myh10 stretch occupies residues 142–254 (LADQRRYWDN…QDTTSCSQRP (113 aa)). Positions 226–242 (SKESTTSSASASMNSHS) are enriched in low complexity. Positions 255–418 (KDTTVNKAVC…LKQNDISSTA (164 aa)) are interaction with F-actin. Polar residues-rich tracts occupy residues 304–326 (KPNE…SSPQ) and 336–356 (YSYQ…VQTQ). Residues 416–443 (STASLAQQQKKEREKELAALRGRYDRRN) are a coiled coil. Positions 453–472 (QGTFPETSSNLPTSDVASCS) are enriched in polar residues. Residues 975–1099 (SVEDKGFLTM…WMQKLNQFLV (125 aa)) form the PH domain.

In terms of assembly, interacts with and bundles F-actin. Interacts with the non-muscle myosin II heavy chains myh9 and myh10, and these interactions may be enhanced by the phosphorylation of myosin II regulatory light chain by mylk.

It is found in the nucleus. Its subcellular location is the cytoplasm. The protein localises to the cytoskeleton. It localises to the cell cortex. The protein resides in the cell projection. It is found in the bleb. Its function is as follows. Required for cytokinesis. Essential for the structural integrity of the cleavage furrow and for completion of cleavage furrow ingression. Plays a role in bleb assembly during metaphase and anaphase of mitosis. May play a significant role in podocyte cell migration. This chain is Anillin (anln), found in Xenopus laevis (African clawed frog).